We begin with the raw amino-acid sequence, 142 residues long: Transcriptional regulator MraZ (142 aa).

SpoVT-AbrB domains lie at 5-51 (ASAL…PRPE) and 77-120 (AMDV…DSQT).

It belongs to the MraZ family. In terms of assembly, forms oligomers.

Its subcellular location is the cytoplasm. The protein localises to the nucleoid. This is Transcriptional regulator MraZ from Burkholderia ambifaria (strain MC40-6).